The sequence spans 449 residues: UDP-N-acetylmuramoylalanine--D-glutamate ligase (449 aa).

ATP is bound at residue 111–117; that stretch reads GTNGKST.

The protein belongs to the MurCDEF family.

The protein resides in the cytoplasm. The catalysed reaction is UDP-N-acetyl-alpha-D-muramoyl-L-alanine + D-glutamate + ATP = UDP-N-acetyl-alpha-D-muramoyl-L-alanyl-D-glutamate + ADP + phosphate + H(+). Its pathway is cell wall biogenesis; peptidoglycan biosynthesis. Its function is as follows. Cell wall formation. Catalyzes the addition of glutamate to the nucleotide precursor UDP-N-acetylmuramoyl-L-alanine (UMA). This chain is UDP-N-acetylmuramoylalanine--D-glutamate ligase, found in Rickettsia felis (strain ATCC VR-1525 / URRWXCal2) (Rickettsia azadi).